The following is a 223-amino-acid chain: Ribosomal RNA small subunit methyltransferase Nep1 (223 aa).

Residues glycine 181, glycine 186, and 199–204 (LYREPL) each bind S-adenosyl-L-methionine.

Belongs to the class IV-like SAM-binding methyltransferase superfamily. RNA methyltransferase NEP1 family. As to quaternary structure, homodimer.

The enzyme catalyses a pseudouridine in rRNA + S-adenosyl-L-methionine = an N(1)-methylpseudouridine in rRNA + S-adenosyl-L-homocysteine + H(+). In terms of biological role, methyltransferase involved in ribosomal biogenesis. Specifically catalyzes the N1-methylation of the pseudouridine corresponding to position 914 in M.jannaschii 16S rRNA. In Pyrococcus furiosus (strain ATCC 43587 / DSM 3638 / JCM 8422 / Vc1), this protein is Ribosomal RNA small subunit methyltransferase Nep1.